We begin with the raw amino-acid sequence, 134 residues long: RxLR effector protein Avh238 (134 aa).

The N-terminal stretch at 1-21 is a signal peptide; the sequence is MRGVFFVAVAVAIFARSSAEA. The RxLR-dEER signature appears at 44–68; it reads RFLRVADSEDDDLAAPADDGKTEER. Residues 50-72 are disordered; that stretch reads DSEDDDLAAPADDGKTEERAPKF. The segment covering 61 to 70 has biased composition (basic and acidic residues); that stretch reads DDGKTEERAP.

Belongs to the RxLR effector family.

It localises to the secreted. The protein resides in the host cytoplasm. Its subcellular location is the host nucleus. In terms of biological role, effector that, due to the lack of a histidine residue at position 79, is not able to induce cell death in tomato, tobacco, eggplant, potato, or in A.thaliana. The polypeptide is RxLR effector protein Avh238 (Phytophthora sojae (Soybean stem and root rot agent)).